We begin with the raw amino-acid sequence, 152 residues long: Transcriptional regulator MraZ (152 aa).

2 SpoVT-AbrB domains span residues 5 to 52 (ASAI…PIHE) and 81 to 124 (AHEV…DEQA).

It belongs to the MraZ family. As to quaternary structure, forms oligomers.

The protein resides in the cytoplasm. The protein localises to the nucleoid. This Shewanella putrefaciens (strain CN-32 / ATCC BAA-453) protein is Transcriptional regulator MraZ.